We begin with the raw amino-acid sequence, 31 residues long: Photosystem II reaction center protein T (31 aa).

Residues 3 to 23 (SVAYILVLTMALSVIFFAIAF) traverse the membrane as a helical segment.

Belongs to the PsbT family. In terms of assembly, PSII is composed of 1 copy each of membrane proteins PsbA, PsbB, PsbC, PsbD, PsbE, PsbF, PsbH, PsbI, PsbJ, PsbK, PsbL, PsbM, PsbT, PsbX, PsbY, PsbZ, Psb30/Ycf12, peripheral proteins PsbO, CyanoQ (PsbQ), PsbU, PsbV and a large number of cofactors. It forms dimeric complexes.

It is found in the cellular thylakoid membrane. Its function is as follows. Found at the monomer-monomer interface of the photosystem II (PS II) dimer, plays a role in assembly and dimerization of PSII. PSII is a light-driven water plastoquinone oxidoreductase, using light energy to abstract electrons from H(2)O, generating a proton gradient subsequently used for ATP formation. This is Photosystem II reaction center protein T from Microcystis aeruginosa (strain NIES-843 / IAM M-2473).